We begin with the raw amino-acid sequence, 132 residues long: MDCGVFEGTVFSGLGHGSFYVSIYARNLRRALGYTPYPGTLNLRVGDAAERLAGCIERARGVRIEPPPIPGERLASVLAFPVEIEGGVRGHIVRPEITVYKGDVVEIVADVYLRDVLKISDGDKVRFRLLDP.

CDP is bound at residue 13–18; sequence GLGHGS. Mg(2+) is bound by residues Thr-40 and Asn-42. FMN is bound by residues Thr-98 and Glu-106. Residue 111–114 participates in CDP binding; that stretch reads VYLR.

Belongs to the archaeal riboflavin kinase family. Requires Mg(2+) as cofactor.

It catalyses the reaction riboflavin + CTP = CDP + FMN + H(+). The protein operates within cofactor biosynthesis; FMN biosynthesis; FMN from riboflavin (CTP route): step 1/1. Functionally, catalyzes the CTP-dependent phosphorylation of riboflavin (vitamin B2) to form flavin mononucleotide (FMN). This Aeropyrum pernix (strain ATCC 700893 / DSM 11879 / JCM 9820 / NBRC 100138 / K1) protein is Riboflavin kinase.